We begin with the raw amino-acid sequence, 473 residues long: MYLTIIFLFISSIIFPLLFFLGKHLSNFRYPNLPPGKIGFPLIGETLSFLSAGRQGHPEKFVTDRVRHFSSGIFKTHLFGSPFAVVTGASGNKFLFTNENKLVISWWPDSVNKIFPSSTQTSSKEEAIKTRMLLMPSMKPEALRRYVGVMDEIAQKHFETEWANQDQLIVFPLTKKFTFSIACRLFLSMDDLERVRKLEEPFTTVMTGVFSIPIDLPGTRFNRAIKASRLLSKEVSTIIRQRKEELKAGKVSVEQDILSHMLMNIGETKDEDLADKIIALLIGGHDTTSIVCTFVVNYLAEFPHIYQRVLEEQKEILNNKDVNEKLTWEDIEKMRYSWNVACEVMRIVPPLAGTFREAIDHFSFKGFYIPKGWKLYWSATATHKNPEYFPEPEKFEPSRFEGSGPKPYTYVPFGGGSRICPGREYARLEILIFMHNLVKRFKWEKVFPKENKLVADPAPIPAKGLPIRIFPQS.

A helical transmembrane segment spans residues 1-21; that stretch reads MYLTIIFLFISSIIFPLLFFL. Cysteine 420 lines the heme pocket.

The protein belongs to the cytochrome P450 family. Requires heme as cofactor.

It localises to the membrane. In terms of biological role, possesses triterpene oxidizing activity. Catalyzes the C28 hydroxylation of alpha-amyrin, beta-amyrin, and lupeol, producing uvaol, erythrodiol, and betulin, respectively. Catalyzes the C28 carboxylation of alpha- and beta-amyrin. Possesses 22alpha-hydroxylation activity against alpha- and beta-amaryn. The sequence is that of Cytochrome P450 716A2 from Arabidopsis thaliana (Mouse-ear cress).